We begin with the raw amino-acid sequence, 811 residues long: N-terminal acetyltransferase B complex subunit arm1 (811 aa).

The protein belongs to the MDM20/NAA25 family. Component of the N-terminal acetyltransferase B (NatB) complex.

Its subcellular location is the cytoplasm. In terms of biological role, non-catalytic subunit of the NatB N-terminal acetyltransferase, which catalyzes acetylation of the amino-terminal methionine residues of all proteins beginning with Met-Asp or Met-Glu and of some proteins beginning with Met-Asn or Met-Met. The sequence is that of N-terminal acetyltransferase B complex subunit arm1 (arm1) from Schizosaccharomyces pombe (strain 972 / ATCC 24843) (Fission yeast).